The following is a 1057-amino-acid chain: Glycine dehydrogenase (decarboxylating), mitochondrial (1057 aa).

Residues 1 to 86 (MERARRLANR…GVGYPSQSRS (86 aa)) constitute a mitochondrion transit peptide. Residues 18 to 27 (SEAKQNRKTE) show a composition bias toward basic and acidic residues. Residues 18–47 (SEAKQNRKTESTSTTTTTPLPFSLSGSSSR) are disordered. Low complexity predominate over residues 28-47 (STSTTTTTPLPFSLSGSSSR). The residue at position 792 (Lys792) is an N6-(pyridoxal phosphate)lysine.

The protein belongs to the GcvP family. In terms of assembly, homodimer. The glycine cleavage system is composed of four proteins: P, T, L and H. Requires pyridoxal 5'-phosphate as cofactor. In terms of tissue distribution, highly expressed in leaves. Detected in roots and embryos.

Its subcellular location is the mitochondrion. It carries out the reaction N(6)-[(R)-lipoyl]-L-lysyl-[glycine-cleavage complex H protein] + glycine + H(+) = N(6)-[(R)-S(8)-aminomethyldihydrolipoyl]-L-lysyl-[glycine-cleavage complex H protein] + CO2. In terms of biological role, the glycine cleavage system catalyzes the degradation of glycine. The P protein binds the alpha-amino group of glycine through its pyridoxal phosphate cofactor; CO(2) is released and the remaining methylamine moiety is then transferred to the lipoamide cofactor of the H protein. The sequence is that of Glycine dehydrogenase (decarboxylating), mitochondrial (GDCSP) from Pisum sativum (Garden pea).